Consider the following 387-residue polypeptide: Succinate--CoA ligase [ADP-forming] subunit beta (387 aa).

Positions 9–245 (KDLLESYGLK…KSQENAKELK (237 aa)) constitute an ATP-grasp domain. ATP-binding positions include Lys46, 53–55 (GRG), Glu100, Tyr103, and Glu108. Residues Asn200 and Asp214 each coordinate Mg(2+). Residues Asn265 and 322–324 (GIV) contribute to the substrate site.

The protein belongs to the succinate/malate CoA ligase beta subunit family. In terms of assembly, heterotetramer of two alpha and two beta subunits. Mg(2+) serves as cofactor.

It catalyses the reaction succinate + ATP + CoA = succinyl-CoA + ADP + phosphate. The catalysed reaction is GTP + succinate + CoA = succinyl-CoA + GDP + phosphate. It functions in the pathway carbohydrate metabolism; tricarboxylic acid cycle; succinate from succinyl-CoA (ligase route): step 1/1. Its function is as follows. Succinyl-CoA synthetase functions in the citric acid cycle (TCA), coupling the hydrolysis of succinyl-CoA to the synthesis of either ATP or GTP and thus represents the only step of substrate-level phosphorylation in the TCA. The beta subunit provides nucleotide specificity of the enzyme and binds the substrate succinate, while the binding sites for coenzyme A and phosphate are found in the alpha subunit. The protein is Succinate--CoA ligase [ADP-forming] subunit beta of Francisella tularensis subsp. novicida (strain U112).